We begin with the raw amino-acid sequence, 345 residues long: N-malonyltransferase FDB2 (345 aa).

Cysteine 110 (acyl-thioester intermediate) is an active-site residue. Histidine 158 acts as the Proton acceptor in catalysis. Residue aspartate 173 is part of the active site.

The protein belongs to the arylamine N-acetyltransferase family.

It participates in xenobiotic degradation. In terms of biological role, N-malonyltransferase; part of the Fusarium detoxification of benzoxazolinone cluster 2 (FDB2) involved in the degradation of benzoxazolinones produced by the host plant. Maize, wheat, and rye produce the 2 benzoxazinone phytoanticipins 2,4-dihy-droxy-7-methoxy-1,4-benzoxazin-3-one (DIMBOA) and 2,4-dihydroxy-1,4-benzoxazin-3-one (DIBOA) that, due to their inherent instability once released, spontaneously degrade to the more stable corresponding benzoxazolinones, 6-methoxy-2-benzoxazolinone (MBOA) and 2-benzoxazolinone (BOA), respectively. The first step in the detoxification of benzoxazolinones involves the hydrolysis of the cyclic ester bond of benzoxazolinones by the FDB1 cluster gamma-lactamase MBL1 to aminophenols. MBL1 is able to convert BOA into 2-aminophenol (2-AP), as well as MBOA into 5-methoxy-2-aminophenol (2-AMP). The FDB2 cluster N-malonyltransferase FDB2/NAT1 then metabolizes aminophenols via N-malonylation to non-toxic malonamic acids. FDB2/NAT1 converts 2-AP into N-(2-hydroxyphenyl) malonamic acid (HPMA) and 2-AMP into N-(2-hydroxy-4-methoxyphenyl) malonamic acid (HMPMA). The duplicated dienlactone hydrolases DLH1 and DLH2 may provide redundant function for hydrolyzing the lactone moiety in the BOA molecule. The roles of the amidases an other enzymes encoded by the 2 FDB clusters have not been identified so far. This is N-malonyltransferase FDB2 from Gibberella moniliformis (strain M3125 / FGSC 7600) (Maize ear and stalk rot fungus).